We begin with the raw amino-acid sequence, 206 residues long: Thiamine-phosphate synthase (206 aa).

Residues Q35–K39 and N67 each bind 4-amino-2-methyl-5-(diphosphooxymethyl)pyrimidine. Mg(2+)-binding residues include D68 and D87. S106 contributes to the 4-amino-2-methyl-5-(diphosphooxymethyl)pyrimidine binding site. A 2-[(2R,5Z)-2-carboxy-4-methylthiazol-5(2H)-ylidene]ethyl phosphate-binding site is contributed by T132 to T134. A 4-amino-2-methyl-5-(diphosphooxymethyl)pyrimidine-binding site is contributed by K135. 2-[(2R,5Z)-2-carboxy-4-methylthiazol-5(2H)-ylidene]ethyl phosphate is bound by residues G163 and I183–S184.

The protein belongs to the thiamine-phosphate synthase family. Requires Mg(2+) as cofactor.

It carries out the reaction 2-[(2R,5Z)-2-carboxy-4-methylthiazol-5(2H)-ylidene]ethyl phosphate + 4-amino-2-methyl-5-(diphosphooxymethyl)pyrimidine + 2 H(+) = thiamine phosphate + CO2 + diphosphate. The enzyme catalyses 2-(2-carboxy-4-methylthiazol-5-yl)ethyl phosphate + 4-amino-2-methyl-5-(diphosphooxymethyl)pyrimidine + 2 H(+) = thiamine phosphate + CO2 + diphosphate. The catalysed reaction is 4-methyl-5-(2-phosphooxyethyl)-thiazole + 4-amino-2-methyl-5-(diphosphooxymethyl)pyrimidine + H(+) = thiamine phosphate + diphosphate. It functions in the pathway cofactor biosynthesis; thiamine diphosphate biosynthesis; thiamine phosphate from 4-amino-2-methyl-5-diphosphomethylpyrimidine and 4-methyl-5-(2-phosphoethyl)-thiazole: step 1/1. Functionally, condenses 4-methyl-5-(beta-hydroxyethyl)thiazole monophosphate (THZ-P) and 2-methyl-4-amino-5-hydroxymethyl pyrimidine pyrophosphate (HMP-PP) to form thiamine monophosphate (TMP). The chain is Thiamine-phosphate synthase from Methanospirillum hungatei JF-1 (strain ATCC 27890 / DSM 864 / NBRC 100397 / JF-1).